The following is a 327-amino-acid chain: DNA-directed RNA polymerase subunit alpha (327 aa).

An alpha N-terminal domain (alpha-NTD) region spans residues 1–233; it reads MVREKVKVST…NLFIPFLHVE (233 aa). Residues 267 to 327 form an alpha C-terminal domain (alpha-CTD) region; the sequence is LAFQYIFIDQ…KKILDILEKK (61 aa).

This sequence belongs to the RNA polymerase alpha chain family. As to quaternary structure, in plastids the minimal PEP RNA polymerase catalytic core is composed of four subunits: alpha, beta, beta', and beta''. When a (nuclear-encoded) sigma factor is associated with the core the holoenzyme is formed, which can initiate transcription.

It localises to the plastid. The protein resides in the chloroplast. The catalysed reaction is RNA(n) + a ribonucleoside 5'-triphosphate = RNA(n+1) + diphosphate. Its function is as follows. DNA-dependent RNA polymerase catalyzes the transcription of DNA into RNA using the four ribonucleoside triphosphates as substrates. The protein is DNA-directed RNA polymerase subunit alpha of Crucihimalaya wallichii (Rock-cress).